The sequence spans 72 residues: Large ribosomal subunit protein bL31 (72 aa).

The Zn(2+) site is built by Cys-16, Cys-18, Cys-36, and Cys-39.

The protein belongs to the bacterial ribosomal protein bL31 family. Type A subfamily. As to quaternary structure, part of the 50S ribosomal subunit. Zn(2+) serves as cofactor.

In terms of biological role, binds the 23S rRNA. This Geobacter sp. (strain M21) protein is Large ribosomal subunit protein bL31.